Reading from the N-terminus, the 226-residue chain is Staphylococcal superantigen-like 1 (226 aa).

A signal peptide spans 1 to 30 (MKFKAIAKASLALGMLATGVITSNVQSVQA).

This sequence belongs to the staphylococcal/streptococcal toxin family. In terms of assembly, homodimer.

It localises to the secreted. Functionally, mediates virulence by proteolytically cleaving host proteins, including collagens types I and IV as well as human cytokines IL8, IL17A, and IFN-gamma. The chain is Staphylococcal superantigen-like 1 from Staphylococcus aureus (strain NCTC 8325 / PS 47).